We begin with the raw amino-acid sequence, 88 residues long: Small ribosomal subunit protein bS20 (88 aa).

The segment at 69-88 (KNTASRKKSRLTKRFNKLTG) is disordered. Positions 71–88 (TASRKKSRLTKRFNKLTG) are enriched in basic residues.

This sequence belongs to the bacterial ribosomal protein bS20 family.

In terms of biological role, binds directly to 16S ribosomal RNA. The sequence is that of Small ribosomal subunit protein bS20 from Pelotomaculum thermopropionicum (strain DSM 13744 / JCM 10971 / SI).